We begin with the raw amino-acid sequence, 156 residues long: Egg-lysin (156 aa).

An N-terminal signal peptide occupies residues 1–18; the sequence is MKLLVLCVFAMMATLAVS.

In terms of assembly, monomer. Homodimer. Molecules associate into dimers and then rapidly dissociate again. Interacts (as a monomer) with the egg vitelline layer protein VERL (via VERL repeats); each VERL chain can bind multiple copies of lysin. As to expression, sperm.

Its subcellular location is the cytoplasmic vesicle. The protein resides in the secretory vesicle. It is found in the acrosome lumen. Functionally, creates a 3 um hole in the egg vitelline layer through which the sperm passes. Does not have enzyme activity. Species-specific interaction between the sperm protein lysin and the egg protein VERL exposes a basic surface on lysin that may dissociate the egg vitelline layer via electrostatic repulsion. Plays a role in ensuring species-specific fertilization. The sequence is that of Egg-lysin from Haliotis cracherodii (Black abalone).